The sequence spans 717 residues: Amino-acid acetyltransferase, mitochondrial (717 aa).

The transit peptide at M1 to D23 directs the protein to the mitochondrion. Residues K35–P70 are disordered. The segment covering T39–S50 has biased composition (low complexity). Residues A51–P70 show a composition bias toward basic and acidic residues. Positions N518–D691 constitute an N-acetyltransferase domain.

This sequence belongs to the acetyltransferase family.

Its subcellular location is the mitochondrion. It carries out the reaction L-glutamate + acetyl-CoA = N-acetyl-L-glutamate + CoA + H(+). Its pathway is amino-acid biosynthesis; L-arginine biosynthesis; N(2)-acetyl-L-ornithine from L-glutamate: step 1/4. In terms of biological role, N-acetylglutamate synthase involved in arginine biosynthesis. The chain is Amino-acid acetyltransferase, mitochondrial (arg2) from Pyrenophora tritici-repentis (strain Pt-1C-BFP) (Wheat tan spot fungus).